Consider the following 353-residue polypeptide: Photosystem II D2 protein (353 aa).

Thr-2 is subject to N-acetylthreonine. Phosphothreonine is present on Thr-2. A helical membrane pass occupies residues 41–61; the sequence is CAYFALGGWFTGTTFVTSWYT. His-118 provides a ligand contact to chlorophyll a. Residues 125-141 traverse the membrane as a helical segment; the sequence is GFMLRQFELARSVQLRP. 2 residues coordinate pheophytin a: Gln-130 and Asn-143. A helical membrane pass occupies residues 153–166; it reads VFVSVFLIYPLGQS. His-198 lines the chlorophyll a pocket. A helical transmembrane segment spans residues 208–228; that stretch reads AALLCAIHGATVENTLFEDGD. A plastoquinone is bound by residues His-215 and Phe-262. Fe cation is bound at residue His-215. His-269 serves as a coordination point for Fe cation. The helical transmembrane segment at 279 to 295 threads the bilayer; it reads GLWMSAIGVVGLALNLR.

It belongs to the reaction center PufL/M/PsbA/D family. In terms of assembly, PSII is composed of 1 copy each of membrane proteins PsbA, PsbB, PsbC, PsbD, PsbE, PsbF, PsbH, PsbI, PsbJ, PsbK, PsbL, PsbM, PsbT, PsbX, PsbY, PsbZ, Psb30/Ycf12, at least 3 peripheral proteins of the oxygen-evolving complex and a large number of cofactors. It forms dimeric complexes. It depends on The D1/D2 heterodimer binds P680, chlorophylls that are the primary electron donor of PSII, and subsequent electron acceptors. It shares a non-heme iron and each subunit binds pheophytin, quinone, additional chlorophylls, carotenoids and lipids. There is also a Cl(-1) ion associated with D1 and D2, which is required for oxygen evolution. The PSII complex binds additional chlorophylls, carotenoids and specific lipids. as a cofactor.

It is found in the plastid. It localises to the chloroplast thylakoid membrane. The enzyme catalyses 2 a plastoquinone + 4 hnu + 2 H2O = 2 a plastoquinol + O2. In terms of biological role, photosystem II (PSII) is a light-driven water:plastoquinone oxidoreductase that uses light energy to abstract electrons from H(2)O, generating O(2) and a proton gradient subsequently used for ATP formation. It consists of a core antenna complex that captures photons, and an electron transfer chain that converts photonic excitation into a charge separation. The D1/D2 (PsbA/PsbD) reaction center heterodimer binds P680, the primary electron donor of PSII as well as several subsequent electron acceptors. D2 is needed for assembly of a stable PSII complex. The protein is Photosystem II D2 protein of Lolium perenne (Perennial ryegrass).